We begin with the raw amino-acid sequence, 236 residues long: Small ribosomal subunit protein uS3 (236 aa).

The 74-residue stretch at 39–112 (IREFITKHPK…RINLKVEEVG (74 aa)) folds into the KH type-2 domain. A disordered region spans residues 212-236 (YGDDNDGADAQTGQASKKPKRSYKR).

Belongs to the universal ribosomal protein uS3 family. In terms of assembly, part of the 30S ribosomal subunit. Forms a tight complex with proteins S10 and S14.

Its function is as follows. Binds the lower part of the 30S subunit head. Binds mRNA in the 70S ribosome, positioning it for translation. The chain is Small ribosomal subunit protein uS3 from Rhodopirellula baltica (strain DSM 10527 / NCIMB 13988 / SH1).